A 291-amino-acid polypeptide reads, in one-letter code: ATP synthase gamma chain (291 aa).

The protein belongs to the ATPase gamma chain family. As to quaternary structure, F-type ATPases have 2 components, CF(1) - the catalytic core - and CF(0) - the membrane proton channel. CF(1) has five subunits: alpha(3), beta(3), gamma(1), delta(1), epsilon(1). CF(0) has three main subunits: a, b and c.

It localises to the cell inner membrane. Functionally, produces ATP from ADP in the presence of a proton gradient across the membrane. The gamma chain is believed to be important in regulating ATPase activity and the flow of protons through the CF(0) complex. This is ATP synthase gamma chain from Cupriavidus metallidurans (strain ATCC 43123 / DSM 2839 / NBRC 102507 / CH34) (Ralstonia metallidurans).